Consider the following 387-residue polypeptide: MALVMLARAPAPPLLLPSPNPPPCALPQDLTSLVSPSEPPDPPDPPDYLVGASNSFLSILLLRSSDLGSDLVQALSPLDLGFALRSITAVCSSWYQVFPLACLELWFSIPHLSHPLVTLSKGFVSLKGSNFFEFFTFFWNMPSFILQFPHHEDVMISTSFRLVLPQYEAVMILLKLKLFLPHYEDVLFSIGLRIQLLLPQYEVGLILYKLRLLLPHYEDVIQKLWLRAIHVIVSLVWFLEISRRIKEKTYDVLTRNDLGSWTPDLFIEKWWFSQPHTSPKLRFFSHLVGSRSWCFVAYAIVAVFHDAFYPLEDVASPDSRSPSVLSYFRKLISCFSTIGVSNFSCLTVMYVFIFFFRAFRMPFVAVVSLAFVASLMYLLNHFSIVGE.

Positions 10–25 (PAPPLLLPSPNPPPCA) are enriched in pro residues. The tract at residues 10–45 (PAPPLLLPSPNPPPCALPQDLTSLVSPSEPPDPPDP) is disordered. 8 helical membrane passes run 97-117 (VFPL…HPLV), 128-148 (GSNF…ILQF), 154-174 (VMIS…MILL), 186-206 (VLFS…VGLI), 221-241 (IQKL…FLEI), 292-312 (SWCF…YPLE), 335-355 (FSTI…FIFF), and 362-382 (PFVA…LNHF).

It localises to the membrane. In Arabidopsis thaliana (Mouse-ear cress), this protein is Putative transmembrane protein At3g54730.